A 265-amino-acid chain; its full sequence is Phosphonoacetaldehyde hydrolase (265 aa).

Aspartate 9 (nucleophile) is an active-site residue. Positions 9 and 11 each coordinate Mg(2+). The Schiff-base intermediate with substrate role is filled by lysine 50. Residue aspartate 184 coordinates Mg(2+).

This sequence belongs to the HAD-like hydrolase superfamily. PhnX family. Homodimer. It depends on Mg(2+) as a cofactor.

It catalyses the reaction phosphonoacetaldehyde + H2O = acetaldehyde + phosphate + H(+). Functionally, involved in phosphonate degradation. This chain is Phosphonoacetaldehyde hydrolase, found in Lactiplantibacillus plantarum (strain ATCC BAA-793 / NCIMB 8826 / WCFS1) (Lactobacillus plantarum).